The chain runs to 293 residues: Probable aspartoacylase (293 aa).

Residues His14 and Glu17 each contribute to the Zn(2+) site. Residues Arg56 and 63–64 (NR) each bind substrate. Residue His106 coordinates Zn(2+). 2 residues coordinate substrate: Glu165 and Tyr276.

This sequence belongs to the AspA/AstE family. Aspartoacylase subfamily. It depends on Zn(2+) as a cofactor.

It catalyses the reaction an N-acyl-L-aspartate + H2O = a carboxylate + L-aspartate. This chain is Probable aspartoacylase, found in Trichodesmium erythraeum (strain IMS101).